The chain runs to 86 residues: Small ribosomal subunit protein bS20 (86 aa).

This sequence belongs to the bacterial ribosomal protein bS20 family.

Functionally, binds directly to 16S ribosomal RNA. The polypeptide is Small ribosomal subunit protein bS20 (Bifidobacterium longum (strain DJO10A)).